The chain runs to 739 residues: Protein kinase C (739 aa).

In terms of domain architecture, C2 spans 1-117 (MFTGKLQIKV…SETAVQDLWV (117 aa)). 2 Phorbol-ester/DAG-type zinc fingers span residues 176 to 226 (GHKF…VSKC) and 251 to 301 (PHRF…ANTC). Positions 408 to 665 (FNFIKVLGKG…ENEIRKHPFF (258 aa)) constitute a Protein kinase domain. ATP is bound by residues 414 to 422 (LGKGSFGKV) and Lys437. Residue Asp532 is the Proton acceptor of the active site. The AGC-kinase C-terminal domain maps to 666-737 (AKLDWKELEK…VNPKFGPERK (72 aa)).

The protein belongs to the protein kinase superfamily. AGC Ser/Thr protein kinase family. PKC subfamily.

It carries out the reaction L-seryl-[protein] + ATP = O-phospho-L-seryl-[protein] + ADP + H(+). The catalysed reaction is L-threonyl-[protein] + ATP = O-phospho-L-threonyl-[protein] + ADP + H(+). Its function is as follows. PKC is activated by diacylglycerol which in turn phosphorylates a range of cellular proteins. PKC also serves as the receptor for phorbol esters, a class of tumor promoters. This chain is Protein kinase C (Pkc98E), found in Drosophila melanogaster (Fruit fly).